The chain runs to 141 residues: Nucleoside diphosphate kinase (141 aa).

The ATP site is built by Lys-11, Phe-59, Arg-87, Thr-93, Arg-104, and Asn-114. His-117 (pros-phosphohistidine intermediate) is an active-site residue.

It belongs to the NDK family. As to quaternary structure, homotetramer. It depends on Mg(2+) as a cofactor.

It localises to the cytoplasm. It carries out the reaction a 2'-deoxyribonucleoside 5'-diphosphate + ATP = a 2'-deoxyribonucleoside 5'-triphosphate + ADP. The catalysed reaction is a ribonucleoside 5'-diphosphate + ATP = a ribonucleoside 5'-triphosphate + ADP. Its function is as follows. Major role in the synthesis of nucleoside triphosphates other than ATP. The ATP gamma phosphate is transferred to the NDP beta phosphate via a ping-pong mechanism, using a phosphorylated active-site intermediate. In Polynucleobacter necessarius subsp. necessarius (strain STIR1), this protein is Nucleoside diphosphate kinase.